The following is a 201-amino-acid chain: Segregation and condensation protein B (201 aa).

It belongs to the ScpB family. As to quaternary structure, homodimer. Homodimerization may be required to stabilize the binding of ScpA to the Smc head domains. Component of a cohesin-like complex composed of ScpA, ScpB and the Smc homodimer, in which ScpA and ScpB bind to the head domain of Smc. The presence of the three proteins is required for the association of the complex with DNA.

Its subcellular location is the cytoplasm. Its function is as follows. Participates in chromosomal partition during cell division. May act via the formation of a condensin-like complex containing Smc and ScpA that pull DNA away from mid-cell into both cell halves. The polypeptide is Segregation and condensation protein B (Enterococcus faecalis (strain ATCC 700802 / V583)).